The primary structure comprises 162 residues: MARVEL domain-containing protein 1 (162 aa).

Over 1–17 the chain is Cytoplasmic; sequence MPTQPQEKRSFLQFLKS. Residues 14-155 enclose the MARVEL domain; the sequence is FLKSFVGIVR…SGIYCSCRKC (142 aa). Residues 18–38 traverse the membrane as a helical segment; it reads FVGIVRVLQILLGAGLWVTIA. Over 39 to 47 the chain is Extracellular; it reads ANKYEGSIH. The helical transmembrane segment at 48-68 threads the bilayer; the sequence is FVLFVAVLFWLLTLAIFILTL. The Cytoplasmic portion of the chain corresponds to 69–86; it reads LDKQDLVPIVGGERWLLS. The chain crosses the membrane as a helical span at residues 87-107; that stretch reads NLIHDVVATLLYLSTIGIMIY. Residues 108-127 are Extracellular-facing; sequence KTQKNSYCNLDVYKHHCLYK. Residues 128–148 traverse the membrane as a helical segment; it reads VYLTASVFACLTAAVYLLSGI. Over 149–162 the chain is Cytoplasmic; sequence YCSCRKCRGERTVV.

It is found in the membrane. The protein localises to the nucleus. This Danio rerio (Zebrafish) protein is MARVEL domain-containing protein 1 (marveld1).